The chain runs to 637 residues: 1-deoxy-D-xylulose-5-phosphate synthase (637 aa).

Residues His76 and 117 to 119 (GHS) each bind thiamine diphosphate. Residue Asp148 coordinates Mg(2+). Residues 149–150 (GA), Asn177, Tyr294, and Glu381 each bind thiamine diphosphate. Asn177 lines the Mg(2+) pocket.

This sequence belongs to the transketolase family. DXPS subfamily. As to quaternary structure, homodimer. Requires Mg(2+) as cofactor. The cofactor is thiamine diphosphate.

It catalyses the reaction D-glyceraldehyde 3-phosphate + pyruvate + H(+) = 1-deoxy-D-xylulose 5-phosphate + CO2. It functions in the pathway metabolic intermediate biosynthesis; 1-deoxy-D-xylulose 5-phosphate biosynthesis; 1-deoxy-D-xylulose 5-phosphate from D-glyceraldehyde 3-phosphate and pyruvate: step 1/1. Its function is as follows. Catalyzes the acyloin condensation reaction between C atoms 2 and 3 of pyruvate and glyceraldehyde 3-phosphate to yield 1-deoxy-D-xylulose-5-phosphate (DXP). This chain is 1-deoxy-D-xylulose-5-phosphate synthase, found in Neisseria gonorrhoeae (strain ATCC 700825 / FA 1090).